We begin with the raw amino-acid sequence, 251 residues long: MSKKQSTICQKVGIADLEIPIILGQKDGKLQHSIASCKITATIKETLKGDISGEVQRLLPSFTKEIEPKSWHRLLEEFKENIGVEKITLSLSCPFFVSKKAPVSELRGLMEYNCTFSASTGESGITTSLYVPVTTLCPCSKEISDGGAHNQRAEAIFRVEMKEHLWLEDLIQLVEESASCQVYSVLKRPDEKYVTEKAFDNPMFVEDVVRKIAVRAGEHPLIHAFSISVESFESIHKHNAYAYVNSEDLNL.

Belongs to the GTP cyclohydrolase IV family.

The enzyme catalyses GTP + H2O = 7,8-dihydroneopterin 3'-triphosphate + formate + H(+). Its pathway is cofactor biosynthesis; 7,8-dihydroneopterin triphosphate biosynthesis; 7,8-dihydroneopterin triphosphate from GTP: step 1/1. Converts GTP to 7,8-dihydroneopterin triphosphate. This Desulfotalea psychrophila (strain LSv54 / DSM 12343) protein is GTP cyclohydrolase FolE2.